Here is a 207-residue protein sequence, read N- to C-terminus: MTQSQALRVGIGGPVGSGKTALTLALCRALRDKYNIAVVTNDIYTAEDAQFLVRNEALAPDRIIGVETGGCPHTAIREDASINLEAVDRLNQRFPGLEIIFVESGGDNLAATFSPELSDLTLYVIDVSAGDKIPRKGGPGITKSDLLVINKIDLAPMVGASLEVMDRDARKMRGERPFIFSNLKTGQGLAEIIAFIETQGLLRPHAG.

GTP is bound at residue 13–20 (GPVGSGKT).

This sequence belongs to the SIMIBI class G3E GTPase family. UreG subfamily. As to quaternary structure, homodimer. UreD, UreF and UreG form a complex that acts as a GTP-hydrolysis-dependent molecular chaperone, activating the urease apoprotein by helping to assemble the nickel containing metallocenter of UreC. The UreE protein probably delivers the nickel.

It localises to the cytoplasm. In terms of biological role, facilitates the functional incorporation of the urease nickel metallocenter. This process requires GTP hydrolysis, probably effectuated by UreG. In Azoarcus sp. (strain BH72), this protein is Urease accessory protein UreG.